We begin with the raw amino-acid sequence, 228 residues long: MSDSAVQRSSGRGRFITFEGGEGTGKSTQIKKLADRLKAARMRTLVTREPGGSPGAEIMRHLVLSGMGKLLGPEAETLLFAAARDDHVHTVIEPALKQGIWVLCDRFADSTRAYQGSLGSVSPGLINAMQRVTIGDLKPDLTIILDLPVEIGLQRAAARRGSGTPDRFEGEQLSFHQGLREAYRKIAADEPARCVLIDANSDPDTVAGRVWSALRDRLLPTPASVVSV.

The span at 1–10 (MSDSAVQRSS) shows a compositional bias: polar residues. The disordered stretch occupies residues 1 to 23 (MSDSAVQRSSGRGRFITFEGGEG). An ATP-binding site is contributed by 20–27 (GGEGTGKS).

It belongs to the thymidylate kinase family.

The catalysed reaction is dTMP + ATP = dTDP + ADP. In terms of biological role, phosphorylation of dTMP to form dTDP in both de novo and salvage pathways of dTTP synthesis. In Bradyrhizobium diazoefficiens (strain JCM 10833 / BCRC 13528 / IAM 13628 / NBRC 14792 / USDA 110), this protein is Thymidylate kinase.